We begin with the raw amino-acid sequence, 501 residues long: Probable cytosol aminopeptidase (501 aa).

Residues K270 and D275 each contribute to the Mn(2+) site. K282 is an active-site residue. 3 residues coordinate Mn(2+): D293, D352, and E354. R356 is an active-site residue.

It belongs to the peptidase M17 family. Requires Mn(2+) as cofactor.

Its subcellular location is the cytoplasm. The enzyme catalyses Release of an N-terminal amino acid, Xaa-|-Yaa-, in which Xaa is preferably Leu, but may be other amino acids including Pro although not Arg or Lys, and Yaa may be Pro. Amino acid amides and methyl esters are also readily hydrolyzed, but rates on arylamides are exceedingly low.. It catalyses the reaction Release of an N-terminal amino acid, preferentially leucine, but not glutamic or aspartic acids.. In terms of biological role, presumably involved in the processing and regular turnover of intracellular proteins. Catalyzes the removal of unsubstituted N-terminal amino acids from various peptides. The protein is Probable cytosol aminopeptidase of Wigglesworthia glossinidia brevipalpis.